The sequence spans 87 residues: MEKAVKQEIMEKYARHEGDTGSPEVQIALLTTRINHLNEHLKIHKKDHHSRRGLLMMVGKRRGLLNYLIKQDIERYRAIIKALNLRK.

This sequence belongs to the universal ribosomal protein uS15 family. In terms of assembly, part of the 30S ribosomal subunit. Forms a bridge to the 50S subunit in the 70S ribosome, contacting the 23S rRNA.

Its function is as follows. One of the primary rRNA binding proteins, it binds directly to 16S rRNA where it helps nucleate assembly of the platform of the 30S subunit by binding and bridging several RNA helices of the 16S rRNA. In terms of biological role, forms an intersubunit bridge (bridge B4) with the 23S rRNA of the 50S subunit in the ribosome. In Clostridium kluyveri (strain NBRC 12016), this protein is Small ribosomal subunit protein uS15.